The sequence spans 518 residues: Sensor protein kinase HptS (518 aa).

2 helical membrane-spanning segments follow: residues 20–40 (IFPV…IYIW) and 222–242 (GITL…FGFI). The Histidine kinase domain occupies 297-513 (EQLIHSIEHT…LICYKIPLSR (217 aa)). Phosphohistidine; by autocatalysis is present on histidine 325.

Autophosphorylated.

It is found in the cell membrane. It carries out the reaction ATP + protein L-histidine = ADP + protein N-phospho-L-histidine.. Member of the two-component regulatory system HptS/HptR that regulates genes involved in hexose phosphate transport system in response to changes in extracellular phosphate sources. May act as a sensor protein kinase which is autophosphorylated at a histidine residue and transfers its phosphate group to the conserved aspartic acid residue in the regulatory domain of HptS. In turn, HptS antagonizes CcpA-dependent transcription of a subset of CcpA-regulated genes involved in antibiotic susceptibility. This Staphylococcus aureus (strain Mu50 / ATCC 700699) protein is Sensor protein kinase HptS (hptS).